A 328-amino-acid chain; its full sequence is Tetraacyldisaccharide 4'-kinase (328 aa).

An ATP-binding site is contributed by 55-62; the sequence is TVGGNGKT.

Belongs to the LpxK family.

The enzyme catalyses a lipid A disaccharide + ATP = a lipid IVA + ADP + H(+). It functions in the pathway glycolipid biosynthesis; lipid IV(A) biosynthesis; lipid IV(A) from (3R)-3-hydroxytetradecanoyl-[acyl-carrier-protein] and UDP-N-acetyl-alpha-D-glucosamine: step 6/6. In terms of biological role, transfers the gamma-phosphate of ATP to the 4'-position of a tetraacyldisaccharide 1-phosphate intermediate (termed DS-1-P) to form tetraacyldisaccharide 1,4'-bis-phosphate (lipid IVA). The polypeptide is Tetraacyldisaccharide 4'-kinase (Hamiltonella defensa subsp. Acyrthosiphon pisum (strain 5AT)).